The sequence spans 563 residues: DNA mismatch repair protein MutL (563 aa).

This sequence belongs to the DNA mismatch repair MutL/HexB family.

Functionally, this protein is involved in the repair of mismatches in DNA. It is required for dam-dependent methyl-directed DNA mismatch repair. May act as a 'molecular matchmaker', a protein that promotes the formation of a stable complex between two or more DNA-binding proteins in an ATP-dependent manner without itself being part of a final effector complex. The protein is DNA mismatch repair protein MutL of Trichormus variabilis (strain ATCC 29413 / PCC 7937) (Anabaena variabilis).